The chain runs to 349 residues: MDENQKKSLELAIKQIDKAFGKGTLIRLGDKEVIPVETISTGSLGLDLALGVGGLPRGRVIEIYGPESSGKTTLTLHAIAEAQKAGGVCAFIDAEHALDVKYAKEIGVDTDNLLVSQPDFGEQALEILETVIRSGAVDLVVVDSVAALTPKVEIDGDMDDQQVGVQARLMSKALRKVTGLLSKMNCTVIFINQIRMKIGMTGYGSPETTTGGNALKFYSSVRLDIRRIATLKQGENSIGNRVKVKVVKNKVAAPFKQAEFDIMFGEGISKTGELVDYGVKLDIVDKAGAWFSYGDSKIGQGRENSKVFLKDNPEVAREIENKILESMGVNDELITSGTDDSDDISGLDD.

65–72 (GPESSGKT) contacts ATP.

This sequence belongs to the RecA family.

Its subcellular location is the cytoplasm. Can catalyze the hydrolysis of ATP in the presence of single-stranded DNA, the ATP-dependent uptake of single-stranded DNA by duplex DNA, and the ATP-dependent hybridization of homologous single-stranded DNAs. It interacts with LexA causing its activation and leading to its autocatalytic cleavage. This Aliarcobacter butzleri (strain RM4018) (Arcobacter butzleri) protein is Protein RecA.